Consider the following 869-residue polypeptide: Aconitate hydratase A (869 aa).

[4Fe-4S] cluster contacts are provided by Cys411, Cys477, and Cys480.

This sequence belongs to the aconitase/IPM isomerase family. Monomer. Requires [4Fe-4S] cluster as cofactor.

It carries out the reaction citrate = D-threo-isocitrate. It catalyses the reaction (2S,3R)-3-hydroxybutane-1,2,3-tricarboxylate = 2-methyl-cis-aconitate + H2O. It functions in the pathway carbohydrate metabolism; tricarboxylic acid cycle; isocitrate from oxaloacetate: step 2/2. Its pathway is organic acid metabolism; propanoate degradation. Involved in the catabolism of short chain fatty acids (SCFA) via the tricarboxylic acid (TCA)(acetyl degradation route) and the 2-methylcitrate cycle I (propionate degradation route). Catalyzes the reversible isomerization of citrate to isocitrate via cis-aconitate. Could catalyze the hydration of 2-methyl-cis-aconitate to yield (2S,3R)-2-methylisocitrate. The apo form of AcnA functions as a RNA-binding regulatory protein. The chain is Aconitate hydratase A from Cupriavidus necator (Alcaligenes eutrophus).